A 1371-amino-acid polypeptide reads, in one-letter code: DNA-directed RNA polymerase subunit beta' (1371 aa).

Residues Cys-71, Cys-73, Cys-86, and Cys-89 each coordinate Zn(2+). Mg(2+)-binding residues include Asp-461, Asp-463, and Asp-465. Residues Cys-803, Cys-877, Cys-884, and Cys-887 each coordinate Zn(2+).

Belongs to the RNA polymerase beta' chain family. As to quaternary structure, the RNAP catalytic core consists of 2 alpha, 1 beta, 1 beta' and 1 omega subunit. When a sigma factor is associated with the core the holoenzyme is formed, which can initiate transcription. The cofactor is Mg(2+). Zn(2+) serves as cofactor.

The catalysed reaction is RNA(n) + a ribonucleoside 5'-triphosphate = RNA(n+1) + diphosphate. In terms of biological role, DNA-dependent RNA polymerase catalyzes the transcription of DNA into RNA using the four ribonucleoside triphosphates as substrates. This Thermodesulfovibrio yellowstonii (strain ATCC 51303 / DSM 11347 / YP87) protein is DNA-directed RNA polymerase subunit beta'.